Consider the following 189-residue polypeptide: Small ribosomal subunit protein uS5 (189 aa).

The S5 DRBM domain occupies 22 to 85; sequence FVDKLVAINR…ESAKRDLIFV (64 aa).

Belongs to the universal ribosomal protein uS5 family. As to quaternary structure, part of the 30S ribosomal subunit. Contacts proteins S4 and S8.

Its function is as follows. With S4 and S12 plays an important role in translational accuracy. Located at the back of the 30S subunit body where it stabilizes the conformation of the head with respect to the body. This Allorhizobium ampelinum (strain ATCC BAA-846 / DSM 112012 / S4) (Agrobacterium vitis (strain S4)) protein is Small ribosomal subunit protein uS5.